Here is a 112-residue protein sequence, read N- to C-terminus: Peptidyl-tRNA hydrolase (112 aa).

Belongs to the PTH2 family.

The protein localises to the cytoplasm. The enzyme catalyses an N-acyl-L-alpha-aminoacyl-tRNA + H2O = an N-acyl-L-amino acid + a tRNA + H(+). In terms of biological role, the natural substrate for this enzyme may be peptidyl-tRNAs which drop off the ribosome during protein synthesis. The protein is Peptidyl-tRNA hydrolase of Haloquadratum walsbyi (strain DSM 16790 / HBSQ001).